Reading from the N-terminus, the 1036-residue chain is Phytosulfokine receptor 2 (1036 aa).

The N-terminal stretch at 1–16 is a signal peptide; the sequence is MVIILLLVFFVGSSVS. N-linked (GlcNAc...) asparagine glycosylation is found at Asn-36 and Asn-45. LRR repeat units follow at residues 89 to 111, 113 to 136, 137 to 159, 160 to 182, 185 to 207, 209 to 231, 233 to 256, 257 to 279, 281 to 303, 305 to 326, 329 to 351, 353 to 375, 377 to 398, 403 to 423, 427 to 450, 451 to 473, and 475 to 498; these read ELRV…ISKL, QLQV…SGLK, LIQS…GVFP, GLVM…LCSS, GIQV…YNCS, SIQQ…LYSI, ELEQ…SNLS, GLKS…FGNL, QLEH…LSQC, KLRV…NFTG, DLCV…LGHC, KMKI…FKNL, SLLF…MNVL, NLST…NNVT, NLAI…LNCK, KLEV…IGKM, and SLFY…TELK. N-linked (GlcNAc...) asparagine glycosylation is found at Asn-142, Asn-165, and Asn-205. N-linked (GlcNAc...) asparagine glycosylation is found at Asn-251, Asn-254, and Asn-278. Asn-313 and Asn-323 each carry an N-linked (GlcNAc...) asparagine glycan. N-linked (GlcNAc...) asparagine glycans are attached at residues Asn-385, Asn-403, and Asn-421. Asn-483, Asn-504, Asn-523, Asn-549, and Asn-571 each carry an N-linked (GlcNAc...) asparagine glycan. LRR repeat units follow at residues 561–583 and 585–606; these read ELHM…ISGL and NLEV…SFQS. Residues 680 to 700 traverse the membrane as a helical segment; it reads IVVLTISLAIGITLLLSVILL. At Thr-751 the chain carries Phosphothreonine. The 272-residue stretch at 754–1025 folds into the Protein kinase domain; that stretch reads FSQANIIGCG…PLIEEVVTWL (272 aa). ATP is bound by residues 760–768 and Lys-782; that span reads IGCGGFGLV. Tyr-827 and Tyr-867 each carry phosphotyrosine. The active-site Proton acceptor is the Asp-880. Phosphotyrosine is present on Tyr-922. The stretch at 995-1020 is one LRR 20 repeat; it reads RTVLEMLEIACKCIDHEPRRRPLIEE.

The protein belongs to the protein kinase superfamily. Ser/Thr protein kinase family.

The protein localises to the cell membrane. The enzyme catalyses L-seryl-[protein] + ATP = O-phospho-L-seryl-[protein] + ADP + H(+). The catalysed reaction is L-threonyl-[protein] + ATP = O-phospho-L-threonyl-[protein] + ADP + H(+). In terms of biological role, phytosulfokine receptor with a serine/threonine-protein kinase activity. In Arabidopsis thaliana (Mouse-ear cress), this protein is Phytosulfokine receptor 2 (PSKR2).